We begin with the raw amino-acid sequence, 64 residues long: MDCRTQRLKNRHSRWAETQAHIPLHAFSMSPILRARHHHFRNTGFAFRQCAQKASFSHPSQLKD.

The polypeptide is Protein YnhH (Escherichia coli (strain K12)).